Here is a 299-residue protein sequence, read N- to C-terminus: ATP phosphoribosyltransferase (299 aa).

The protein belongs to the ATP phosphoribosyltransferase family. Long subfamily. As to quaternary structure, equilibrium between an active dimeric form, an inactive hexameric form and higher aggregates. Interconversion between the various forms is largely reversible and is influenced by the natural substrates and inhibitors of the enzyme. Mg(2+) serves as cofactor.

The protein resides in the cytoplasm. It catalyses the reaction 1-(5-phospho-beta-D-ribosyl)-ATP + diphosphate = 5-phospho-alpha-D-ribose 1-diphosphate + ATP. Its pathway is amino-acid biosynthesis; L-histidine biosynthesis; L-histidine from 5-phospho-alpha-D-ribose 1-diphosphate: step 1/9. Feedback inhibited by histidine. Functionally, catalyzes the condensation of ATP and 5-phosphoribose 1-diphosphate to form N'-(5'-phosphoribosyl)-ATP (PR-ATP). Has a crucial role in the pathway because the rate of histidine biosynthesis seems to be controlled primarily by regulation of HisG enzymatic activity. The chain is ATP phosphoribosyltransferase from Salmonella dublin (strain CT_02021853).